The chain runs to 224 residues: MDQFIKQDETGDLIETGMNVANHFLSAPIQGTNSLSKATIIPGVAPVLIGNPEQKNIQYPTTSHQGSKSKGRGSGARPIIVSSSEGGTGGTQVPEPLFAQTGQGGIVTTVYQDPTIQPTGSYRSVELAKIGKERMINRFVEKPRTSTPVTEFKRGAGSGCSRPDNPRGGHRREWSLSWVQGEVRVFEWCNPICSPITAAARFHSCKCGNCPAKCDQCERDYGPP.

The segment covering 55-65 has biased composition (polar residues); it reads KNIQYPTTSHQ. Disordered regions lie at residues 55–90 and 145–172; these read KNIQ…GTGG and TSTP…GHRR. Zn(2+) is bound by residues His170, Cys189, Cys193, Cys205, Cys207, Cys210, Cys214, and Cys217.

It belongs to the paramyxoviruses V protein family. Interacts with host IFIH1/MDA5 and DHX58/LGP2. Forms with host DDB1, CUL4A, STAT1, STAT2 and STAT3 the mumps virus V-dependent complex (VDC).

It is found in the virion. Its subcellular location is the host cytoplasm. In terms of biological role, plays an essential role in the inhibition of host immune response. Prevents the establishment of cellular antiviral state by blocking interferon-alpha/beta (IFN-alpha/beta) production and signaling pathway. Interacts with host IFIH1/MDA5 and DHX58/LGP2 to inhibit the transduction pathway involved in the activation of IFN-beta promoter, thus protecting the virus against cell antiviral state. Blocks the type I and II interferon signaling pathways by interacting with host STAT1, STAT2 and STAT3, and mediating their ubiquitination and subsequent proteasomal degradation. The protein is Non-structural protein V of Mumps virus genotype B (strain Miyahara vaccine) (MuV).